The sequence spans 276 residues: uncharacterized protein (276 aa).

The 118-residue stretch at 20–137 (PVLIFIPGAN…PPINTFLPDS (118 aa)) folds into the AB hydrolase-1 domain.

This sequence belongs to the AB hydrolase superfamily.

This is an uncharacterized protein from Staphylococcus aureus (strain MRSA252).